A 137-amino-acid polypeptide reads, in one-letter code: Acidic phospholipase A2 VP8 (137 aa).

Positions 1 to 16 (MRILWIVAVCLIGVEG) are cleaved as a signal peptide. 7 disulfides stabilise this stretch: C41/C130, C43/C59, C58/C110, C64/C137, C65/C103, C72/C96, and C90/C101. Residues Y42, G44, and G46 each contribute to the Ca(2+) site. H62 is a catalytic residue. D63 serves as a coordination point for Ca(2+). The active site involves D104.

It belongs to the phospholipase A2 family. Group II subfamily. D49 sub-subfamily. As to quaternary structure, does not form a complex. It depends on Ca(2+) as a cofactor. As to expression, expressed by the venom gland.

Its subcellular location is the secreted. The enzyme catalyses a 1,2-diacyl-sn-glycero-3-phosphocholine + H2O = a 1-acyl-sn-glycero-3-phosphocholine + a fatty acid + H(+). Its function is as follows. Snake venom phospholipase A2 (PLA2) that is not toxic by itself, but the synergistical mixture of a basic and this acidic protein is lethal. PLA2 catalyzes the calcium-dependent hydrolysis of the 2-acyl groups in 3-sn-phosphoglycerides. The sequence is that of Acidic phospholipase A2 VP8 from Daboia palaestinae (Palestine viper).